The sequence spans 86 residues: Small ribosomal subunit protein bS18c (86 aa).

Belongs to the bacterial ribosomal protein bS18 family. Part of the 30S ribosomal subunit.

It localises to the plastid. The protein resides in the chloroplast. This Larix laricina (Tamarack) protein is Small ribosomal subunit protein bS18c.